A 55-amino-acid chain; its full sequence is Large ribosomal subunit protein bL33 (55 aa).

The span at 1-11 (MAKGSREKIKL) shows a compositional bias: basic and acidic residues. Residues 1 to 32 (MAKGSREKIKLESSASTGHFYTTSKNKRTKPE) form a disordered region. Polar residues predominate over residues 13–24 (SSASTGHFYTTS).

It belongs to the bacterial ribosomal protein bL33 family.

The protein is Large ribosomal subunit protein bL33 of Polynucleobacter necessarius subsp. necessarius (strain STIR1).